A 540-amino-acid chain; its full sequence is DNA-(apurinic or apyrimidinic site) endonuclease (540 aa).

Mg(2+) is bound by residues Asn-206 and Glu-239. The interval 256–276 (NNKVYGGKKNEGEERNRGSVK) is disordered. Basic and acidic residues predominate over residues 263–276 (KKNEGEERNRGSVK). Positions 400, 402, 530, and 531 each coordinate Mg(2+). His-531 acts as the Proton acceptor in catalysis.

Belongs to the DNA repair enzymes AP/ExoA family. Requires Mg(2+) as cofactor. It depends on Mn(2+) as a cofactor. In terms of processing, may be proteolytically cleaved.

The protein localises to the mitochondrion. It catalyses the reaction Exonucleolytic cleavage in the 3'- to 5'-direction to yield nucleoside 5'-phosphates.. Its function is as follows. Multifunctional protein that plays a central role in mitochondrial DNA base excision repair pathway induced by oxidative stress. Has apurinic/apyrimidinic (AP) endonuclease activity towards double-stranded DNA (dsDNA). Has nucleotide incision repair (NIR) activity; acts on dsDNA with oxidized bases thymine glycol and 5,6-dihydro-2'-deoxyuridine. Has 3'-5' exonuclease; can use dsDNA templates with 3'-OH termini including blunt-end, gapped and mismatched 3'-recessed. Has 3'-phosphatase activity; cleaves 3'-phosphate from blunt, recessed and gapped dsDNA templates, followed by 3'-5' exonuclease activity. Has RNase H-like activity; cleaves RNA on 3'-recessed RNA-DNA duplex. Plays a role in merosome infection of host erythrocytes. This Plasmodium berghei (strain Anka) protein is DNA-(apurinic or apyrimidinic site) endonuclease.